We begin with the raw amino-acid sequence, 205 residues long: Adenylyl-sulfate kinase (205 aa).

ATP is bound at residue 31-38 (GLSGAGKS). Residue Ser-105 is the Phosphoserine intermediate of the active site.

Belongs to the APS kinase family.

The catalysed reaction is adenosine 5'-phosphosulfate + ATP = 3'-phosphoadenylyl sulfate + ADP + H(+). It participates in sulfur metabolism; hydrogen sulfide biosynthesis; sulfite from sulfate: step 2/3. In terms of biological role, catalyzes the synthesis of activated sulfate. This is Adenylyl-sulfate kinase from Shewanella baltica (strain OS223).